The sequence spans 250 residues: Sugar fermentation stimulation protein homolog (250 aa).

It belongs to the SfsA family.

The chain is Sugar fermentation stimulation protein homolog from Synechococcus sp. (strain CC9311).